A 74-amino-acid chain; its full sequence is Cytochrome c oxidase assembly factor 5 (74 aa).

One can recognise a CHCH domain in the interval 27-65 (ESDCVVQEGKSPRQCLKEGYCNSLKYAFFECKRSVLDNR). The Cx10C motif signature appears at 30-41 (CVVQEGKSPRQC). Intrachain disulfides connect Cys30–Cys57 and Cys41–Cys47. Ser37 is subject to Phosphoserine. A Cx9C motif motif is present at residues 47–57 (CNSLKYAFFEC).

This sequence belongs to the PET191 family.

In terms of biological role, involved in an early step of the mitochondrial complex IV assembly process. The protein is Cytochrome c oxidase assembly factor 5 (Coa5) of Pongo abelii (Sumatran orangutan).